The following is a 196-amino-acid chain: Carnitine operon protein CaiE (196 aa).

Residues 174–196 are disordered; sequence QPLRQMEENRPRLQGTTDVTPKR. Residues 187-196 show a composition bias toward polar residues; the sequence is QGTTDVTPKR.

This sequence belongs to the transferase hexapeptide repeat family.

The protein operates within amine and polyamine metabolism; carnitine metabolism. Functionally, overproduction of CaiE stimulates the activity of CaiB and CaiD. This chain is Carnitine operon protein CaiE (caiE), found in Escherichia coli (strain K12).